Here is a 255-residue protein sequence, read N- to C-terminus: GSTWPSRCHSTLLGDRPHFIQPAPNRVDLLFKDIPESATGLYVFVLLYNGHPEAWTYTLLSTANHFMNVLTDRTRPRLGEHFYTDHGHQLFTPHPSEATTQELGAWTRHYLAFLLIIICTCAALLIALVVWGCILYIRSNRKPYEVLNPFETVYTSVPSNDPTDEVLVFERLASDSDDSFDSSSDEELELPQPPPAAQLQPYSSLESADASRGRSGFKVWFRDTPEASPEPLHRPTPPVGPDYSKVASKLRSILK.

Topologically, residues 1 to 110 are virion surface; sequence GSTWPSRCHS…QELGAWTRHY (110 aa). Residues 111-131 form a helical membrane-spanning segment; sequence LAFLLIIICTCAALLIALVVW. The Intravirion segment spans residues 132–255; sequence GCILYIRSNR…VASKLRSILK (124 aa). Positions 154 to 157 match the Internalization motif motif; sequence YTSV. The acidic stretch occupies residues 173–187; the sequence is ASDSDDSFDSSSDEE. The span at 176–189 shows a compositional bias: acidic residues; sequence SDDSFDSSSDEELE. Disordered stretches follow at residues 176 to 210 and 223 to 245; these read SDDS…SADA and DTPE…DYSK.

This sequence belongs to the alphaherpesvirinae glycoprotein E family. Interacts with gI. Post-translationally, phosphorylated on serines within the acidic cluster. Phosphorylation determines whether endocytosed viral gE traffics to the trans-Golgi network or recycles to the cell membrane.

The protein localises to the virion membrane. It is found in the host cell membrane. The protein resides in the host cell junction. Its subcellular location is the host Golgi apparatus membrane. It localises to the host endosome membrane. Functionally, in epithelial cells, the heterodimer gE/gI is required for the cell-to-cell spread of the virus, by sorting nascent virions to cell junctions. Once the virus reaches the cell junctions, virus particles can spread to adjacent cells extremely rapidly through interactions with cellular receptors that accumulate at these junctions. Implicated in basolateral spread in polarized cells. In neuronal cells, gE/gI is essential for the anterograde spread of the infection throughout the host nervous system. Together with US9, the heterodimer gE/gI is involved in the sorting and transport of viral structural components toward axon tips. The polypeptide is Envelope glycoprotein E (gE) (Equus caballus (Horse)).